The chain runs to 362 residues: Chalcone synthase A (362 aa).

Residue cysteine 168 is part of the active site.

Belongs to the thiolase-like superfamily. Chalcone/stilbene synthases family.

The enzyme catalyses (E)-4-coumaroyl-CoA + 3 malonyl-CoA + 3 H(+) = 2',4,4',6'-tetrahydroxychalcone + 3 CO2 + 4 CoA. It participates in secondary metabolite biosynthesis; flavonoid biosynthesis. Its function is as follows. The primary product of this enzyme is 4,2',4',6'-tetrahydroxychalcone (also termed naringenin-chalcone or chalcone) which can under specific conditions spontaneously isomerize into naringenin. The sequence is that of Chalcone synthase A (CHSA) from Ipomoea trifida (Morning glory).